Consider the following 439-residue polypeptide: Magnesium-dependent glutamate N-prenyltransferase (439 aa).

Residues Asn-322, Thr-326, Glu-330, and Phe-337 each contribute to the Mg(2+) site.

The protein belongs to the terpene synthase family. The cofactor is Mg(2+).

The catalysed reaction is dimethylallyl diphosphate + L-glutamate = prekainate + diphosphate. It functions in the pathway secondary metabolite biosynthesis. Its function is as follows. Magnesium-dependent glutamate N-prenyltransferase: part of the gene cluster that mediates the biosynthesis of kainic acid (KA) and derivatives, natural products with neurochemical activity acting as ionotropic glutamate receptor (iGluR) agonists, thus being neurotoxins. Catalyzes the conversion of L-glutamic acid (L-Glu) to prekainic acid in the presence of dimethylallyl diphosphate (DMAPP). Can also use geranyl diphosphate (GPP) as substrate, thus leading to the formation of N-geranyl-L-glutamic acid (L-NGG). This chain is Magnesium-dependent glutamate N-prenyltransferase, found in Digenea simplex (Marine red alga).